The sequence spans 399 residues: Succinate--CoA ligase [ADP-forming] subunit beta (399 aa).

An ATP-grasp domain is found at 9 to 254 (KAVLAEFGVA…ESEEDPKEIE (246 aa)). Residues lysine 46, 53–55 (GRG), glutamate 109, alanine 112, and glutamate 117 each bind ATP. Positions 209 and 223 each coordinate Mg(2+). Residues asparagine 274 and 331 to 333 (GIM) each bind substrate.

This sequence belongs to the succinate/malate CoA ligase beta subunit family. As to quaternary structure, heterotetramer of two alpha and two beta subunits. Mg(2+) serves as cofactor.

It carries out the reaction succinate + ATP + CoA = succinyl-CoA + ADP + phosphate. The catalysed reaction is GTP + succinate + CoA = succinyl-CoA + GDP + phosphate. The protein operates within carbohydrate metabolism; tricarboxylic acid cycle; succinate from succinyl-CoA (ligase route): step 1/1. Functionally, succinyl-CoA synthetase functions in the citric acid cycle (TCA), coupling the hydrolysis of succinyl-CoA to the synthesis of either ATP or GTP and thus represents the only step of substrate-level phosphorylation in the TCA. The beta subunit provides nucleotide specificity of the enzyme and binds the substrate succinate, while the binding sites for coenzyme A and phosphate are found in the alpha subunit. The chain is Succinate--CoA ligase [ADP-forming] subunit beta from Phenylobacterium zucineum (strain HLK1).